The sequence spans 194 residues: Large ribosomal subunit protein uL6m (194 aa).

Belongs to the universal ribosomal protein uL6 family.

The protein resides in the mitochondrion. This is Large ribosomal subunit protein uL6m (RPL6) from Prototheca wickerhamii.